Reading from the N-terminus, the 208-residue chain is Interleukin-6 (208 aa).

Positions 1–20 (MNSLSTIAFSLGLLLVTATA) are cleaved as a signal peptide. Cysteines 67 and 73 form a disulfide. A Phosphoserine modification is found at Ser-76. Cys-96 and Cys-106 are oxidised to a cystine. Asn-167 is a glycosylation site (N-linked (GlcNAc...) asparagine).

Belongs to the IL-6 superfamily. In terms of assembly, component of a hexamer of two molecules each of IL6, IL6R and IL6ST; first binds to IL6R to associate with the signaling subunit IL6ST. Interacts with IL6R (via the N-terminal ectodomain); this interaction may be affected by IL6R-binding with SORL1, hence decreasing IL6 cis signaling. Interacts with SORL1 (via the N-terminal ectodomain); this interaction leads to IL6 internalization and lysosomal degradation. May form a trimeric complex with the soluble SORL1 ectodomain and soluble IL6R receptor; this interaction might stabilize circulating IL6, hence promoting IL6 trans signaling.

The protein localises to the secreted. In terms of biological role, cytokine with a wide variety of biological functions in immunity, tissue regeneration, and metabolism. Binds to IL6R, then the complex associates to the signaling subunit IL6ST/gp130 to trigger the intracellular IL6-signaling pathway. The interaction with the membrane-bound IL6R and IL6ST stimulates 'classic signaling', whereas the binding of IL6 and soluble IL6R to IL6ST stimulates 'trans-signaling'. Alternatively, 'cluster signaling' occurs when membrane-bound IL6:IL6R complexes on transmitter cells activate IL6ST receptors on neighboring receiver cells. Its function is as follows. IL6 is a potent inducer of the acute phase response. Rapid production of IL6 contributes to host defense during infection and tissue injury, but excessive IL6 synthesis is involved in disease pathology. In the innate immune response, is synthesized by myeloid cells, such as macrophages and dendritic cells, upon recognition of pathogens through toll-like receptors (TLRs) at the site of infection or tissue injury. In the adaptive immune response, is required for the differentiation of B cells into immunoglobulin-secreting cells. Plays a major role in the differentiation of CD4(+) T cell subsets. Essential factor for the development of T follicular helper (Tfh) cells that are required for the induction of germinal-center formation. Required to drive naive CD4(+) T cells to the Th17 lineage. Also required for proliferation of myeloma cells and the survival of plasmablast cells. Acts as an essential factor in bone homeostasis and on vessels directly or indirectly by induction of VEGF, resulting in increased angiogenesis activity and vascular permeability. Induces, through 'trans-signaling' and synergistically with IL1B and TNF, the production of VEGF. Involved in metabolic controls, is discharged into the bloodstream after muscle contraction increasing lipolysis and improving insulin resistance. 'Trans-signaling' in central nervous system also regulates energy and glucose homeostasis. Mediates, through GLP-1, crosstalk between insulin-sensitive tissues, intestinal L cells and pancreatic islets to adapt to changes in insulin demand. Also acts as a myokine. Plays a protective role during liver injury, being required for maintenance of tissue regeneration. Also has a pivotal role in iron metabolism by regulating HAMP/hepcidin expression upon inflammation or bacterial infection. Through activation of IL6ST-YAP-NOTCH pathway, induces inflammation-induced epithelial regeneration. This chain is Interleukin-6 (IL6), found in Delphinapterus leucas (Beluga whale).